A 406-amino-acid chain; its full sequence is Protein PHYTOCHROME KINASE SUBSTRATE 4 (406 aa).

Positions 106 to 119 (SWNSQTGLLSNKNR) are enriched in polar residues. The interval 106–133 (SWNSQTGLLSNKNRQGSDRDGRRSSKKG) is disordered.

It belongs to the PKS family. As to quaternary structure, interacts in vitro with PHYA and PHYB. Expressed in the hypocotyl elongation zone. Not found in the root elongation zone.

Modulates phytochrome-mediated control of hypocotyl growth orientation. Involved in PHYA and PHYB signaling. Acts as an inhibitor of asymmetric growth. Not involved in the control of leaf flattening. This is Protein PHYTOCHROME KINASE SUBSTRATE 4 (PKS4) from Arabidopsis thaliana (Mouse-ear cress).